The sequence spans 226 residues: Membrane protein (226 aa).

The Virion surface portion of the chain corresponds to 1-11 (MSNGSIPVDEV). A helical membrane pass occupies residues 12-32 (IEHLRNWNFTWNIILTILLVV). Residues 33-41 (LQYGHYKYS) lie on the Intravirion side of the membrane. The helical transmembrane segment at 42–62 (VFLYGVKMAILWILWPLVLAL) threads the bilayer. The Virion surface segment spans residues 63–75 (SLFDAWASFQVNW). A helical membrane pass occupies residues 76–96 (VFFAFSILMACITLMLWIMYF). Topologically, residues 97-226 (VNSIRLWRRT…TDSEKVPHLV (130 aa)) are intravirion. Residues 200–216 (RSKHGDYSAVSNPSAVL) are interaction with N protein.

The protein belongs to the alphacoronaviruses M protein family. As to quaternary structure, homomultimer. Interacts with envelope E protein in the budding compartment of the host cell, which is located between endoplasmic reticulum and the Golgi complex. Forms a complex with HE and S proteins. Interacts with nucleocapsid N protein. This interaction probably participates in RNA packaging into the virus.

The protein localises to the virion membrane. It is found in the host Golgi apparatus membrane. Functionally, component of the viral envelope that plays a central role in virus morphogenesis and assembly via its interactions with other viral proteins. The sequence is that of Membrane protein from Sus scrofa (Pig).